Reading from the N-terminus, the 275-residue chain is Nitrogenase iron protein 1 (275 aa).

9–16 provides a ligand contact to ATP; that stretch reads GKGGIGKS. Cys-98 lines the [4Fe-4S] cluster pocket. Arg-101 bears the ADP-ribosylarginine; by dinitrogenase reductase ADP-ribosyltransferase mark. Cys-132 is a binding site for [4Fe-4S] cluster.

Belongs to the NifH/BchL/ChlL family. As to quaternary structure, homodimer. [4Fe-4S] cluster serves as cofactor. Post-translationally, the reversible ADP-ribosylation of Arg-101 inactivates the nitrogenase reductase and regulates nitrogenase activity.

It carries out the reaction N2 + 8 reduced [2Fe-2S]-[ferredoxin] + 16 ATP + 16 H2O = H2 + 8 oxidized [2Fe-2S]-[ferredoxin] + 2 NH4(+) + 16 ADP + 16 phosphate + 6 H(+). Its function is as follows. The key enzymatic reactions in nitrogen fixation are catalyzed by the nitrogenase complex, which has 2 components: the iron protein and the molybdenum-iron protein. The polypeptide is Nitrogenase iron protein 1 (nifH1) (Methanobacterium ivanovii).